The sequence spans 202 residues: Peptide methionine sulfoxide reductase A3 (202 aa).

The tract at residues 1-34 is disordered; it reads MNILNRLGLGSSGQTNMDPSPIAQGNDDDTPAPG. Position 189 is a phosphoserine (S189).

The protein belongs to the MsrA Met sulfoxide reductase family. In terms of tissue distribution, expressed in rosette and cauline leaves, and at lower levels in roots, stems and flowers (at protein level).

It is found in the cytoplasm. The protein localises to the cytosol. The enzyme catalyses L-methionyl-[protein] + [thioredoxin]-disulfide + H2O = L-methionyl-(S)-S-oxide-[protein] + [thioredoxin]-dithiol. It carries out the reaction [thioredoxin]-disulfide + L-methionine + H2O = L-methionine (S)-S-oxide + [thioredoxin]-dithiol. Functionally, catalyzes the reduction of methionine sulfoxide (MetSO) to methionine in proteins. Plays a protective role against oxidative stress by restoring activity to proteins that have been inactivated by methionine oxidation. May prevent cellular oxidative damage due to light exposure. MSRA family specifically reduces the MetSO S-enantiomer. The sequence is that of Peptide methionine sulfoxide reductase A3 (MSRA3) from Arabidopsis thaliana (Mouse-ear cress).